Consider the following 418-residue polypeptide: Serine--tRNA ligase (418 aa).

231-233 (TAE) serves as a coordination point for L-serine. 262–264 (RRE) serves as a coordination point for ATP. Glu285 lines the L-serine pocket. Residue 349-352 (EISS) coordinates ATP. Position 384 (Ser384) interacts with L-serine.

Belongs to the class-II aminoacyl-tRNA synthetase family. Type-1 seryl-tRNA synthetase subfamily. Homodimer. The tRNA molecule binds across the dimer.

The protein localises to the cytoplasm. It catalyses the reaction tRNA(Ser) + L-serine + ATP = L-seryl-tRNA(Ser) + AMP + diphosphate + H(+). The catalysed reaction is tRNA(Sec) + L-serine + ATP = L-seryl-tRNA(Sec) + AMP + diphosphate + H(+). The protein operates within aminoacyl-tRNA biosynthesis; selenocysteinyl-tRNA(Sec) biosynthesis; L-seryl-tRNA(Sec) from L-serine and tRNA(Sec): step 1/1. Catalyzes the attachment of serine to tRNA(Ser). Is also able to aminoacylate tRNA(Sec) with serine, to form the misacylated tRNA L-seryl-tRNA(Sec), which will be further converted into selenocysteinyl-tRNA(Sec). In Coprothermobacter proteolyticus (strain ATCC 35245 / DSM 5265 / OCM 4 / BT), this protein is Serine--tRNA ligase.